The following is a 361-amino-acid chain: GTPase Obg (361 aa).

One can recognise an Obg domain in the interval 1–159 (MKFVDEAFID…KNLKLELKVL (159 aa)). The OBG-type G domain maps to 160 to 334 (ADVGLLGMPN…LIKTIYQHVK (175 aa)). Residues 166–173 (GMPNAGKS), 191–195 (FTTLH), 213–216 (DLPG), 284–287 (NKLD), and 315–317 (SAL) each bind GTP. Positions 173 and 193 each coordinate Mg(2+). The segment at 339–361 (SEQPVEEVDPRFVPLPPESPETP) is disordered. The segment covering 351–361 (VPLPPESPETP) has biased composition (pro residues).

It belongs to the TRAFAC class OBG-HflX-like GTPase superfamily. OBG GTPase family. As to quaternary structure, monomer. It depends on Mg(2+) as a cofactor.

The protein localises to the cytoplasm. An essential GTPase which binds GTP, GDP and possibly (p)ppGpp with moderate affinity, with high nucleotide exchange rates and a fairly low GTP hydrolysis rate. Plays a role in control of the cell cycle, stress response, ribosome biogenesis and in those bacteria that undergo differentiation, in morphogenesis control. The sequence is that of GTPase Obg from Polaromonas sp. (strain JS666 / ATCC BAA-500).